A 234-amino-acid chain; its full sequence is uncharacterized protein (234 aa).

A disordered region spans residues 62-99; that stretch reads NEESISDLNSDNPGNSEPSDVESFVLSDEDENSEKDFS. Positions 67–79 are enriched in polar residues; the sequence is SDLNSDNPGNSEP.

This is an uncharacterized protein from Acanthamoeba polyphaga (Amoeba).